The sequence spans 254 residues: Ribosomal RNA small subunit methyltransferase J (254 aa).

S-adenosyl-L-methionine is bound by residues 107–108, 123–124, and D177; these read RD and ER.

This sequence belongs to the methyltransferase superfamily. RsmJ family.

It is found in the cytoplasm. It catalyses the reaction guanosine(1516) in 16S rRNA + S-adenosyl-L-methionine = N(2)-methylguanosine(1516) in 16S rRNA + S-adenosyl-L-homocysteine + H(+). Functionally, specifically methylates the guanosine in position 1516 of 16S rRNA. The protein is Ribosomal RNA small subunit methyltransferase J of Histophilus somni (strain 2336) (Haemophilus somnus).